Reading from the N-terminus, the 525-residue chain is Arylsulfatase G (525 aa).

The signal sequence occupies residues 1-16 (MGWLFLKVLLAGVSFS). Positions 44, 45, and 84 each coordinate Ca(2+). C84 functions as the Nucleophile in the catalytic mechanism. At C84 the chain carries 3-oxoalanine (Cys). An N-linked (GlcNAc...) asparagine glycan is attached at N117. K137 contacts substrate. H139 is a catalytic residue. Residue S162 coordinates substrate. Residue N215 is glycosylated (N-linked (GlcNAc...) asparagine). H251 contributes to the substrate binding site. Ca(2+) contacts are provided by D302 and N303. 2 N-linked (GlcNAc...) asparagine glycosylation sites follow: N356 and N497.

It belongs to the sulfatase family. Requires Ca(2+) as cofactor. Post-translationally, N-glycosylated. N-glycosylated with both high mannose and complex type sugars. The conversion to 3-oxoalanine (also known as C-formylglycine, FGly), of a serine or cysteine residue in prokaryotes and of a cysteine residue in eukaryotes, is critical for catalytic activity. In terms of processing, the 63-kDa precursor undergoes proteolytic processing in two steps, yielding two fragments in the first step (apparent molecular masses of 44 and 18 kDa). In the second step, the 44-kDa fragment is processed further to the 34- and 10-kDa chains. The 10-kDa chain is a cleavage product of the 44-kDa fragment but linked to the 18-kDa chain through a disulfide bridge. In terms of tissue distribution, widely expressed, with very low expression in brain, lung, heart and skeletal muscle.

It is found in the lysosome. The enzyme catalyses an aryl sulfate + H2O = a phenol + sulfate + H(+). The catalysed reaction is Hydrolysis of the 3-sulfate groups of the N-sulfo-D-glucosamine 3-O-sulfate units of heparin.. Inhibited by phosphate. The phosphate forms a covalent bond with the active site 3-oxoalanine. Displays arylsulfatase activity at acidic pH towards artificial substrates, such as p-nitrocatechol sulfate and also, but with a lower activity towards p-nitrophenyl sulfate and 4-methylumbelliferyl sulfate. Catalyzes the hydrolysis of the 3-sulfate groups of the N-sulfo-D-glucosamine 3-O-sulfate units of heparin. In Homo sapiens (Human), this protein is Arylsulfatase G (ARSG).